The chain runs to 110 residues: UPF0122 protein gbs1018 (110 aa).

It belongs to the UPF0122 family.

In terms of biological role, might take part in the signal recognition particle (SRP) pathway. This is inferred from the conservation of its genetic proximity to ftsY/ffh. May be a regulatory protein. The polypeptide is UPF0122 protein gbs1018 (Streptococcus agalactiae serotype III (strain NEM316)).